Reading from the N-terminus, the 515-residue chain is Nectin-1 (515 aa).

An N-terminal signal peptide occupies residues 1–30 (MARMGLAGAAGRWWGLALGLTAFFLPGTHT). Positions 31 to 141 (QVVQVNDSMY…GNRESQLNLT (111 aa)) constitute an Ig-like V-type domain. The Extracellular segment spans residues 31–354 (QVVQVNDSMY…GRRAGQMPTA (324 aa)). 7 N-linked (GlcNAc...) asparagine glycosylation sites follow: Asn-36, Asn-72, Asn-139, Asn-202, Asn-286, Asn-297, and Asn-332. Cys-51 and Cys-124 are oxidised to a cystine. Ig-like C2-type domains follow at residues 145-243 (KPTN…TLNV) and 247-334 (PEVT…VNIT). 2 disulfide bridges follow: Cys-172–Cys-226 and Cys-269–Cys-316. The tract at residues 282 to 299 (WTTLNGSLPKGVEAQNRT) is interaction with FGFR. A helical membrane pass occupies residues 355–375 (IIGGVAGSVLLVLIVVGGIIV). At 376-515 (ALRRRRHTFK…SFISKKEWYV (140 aa)) the chain is on the cytoplasmic side. The tract at residues 399–486 (YSKAGIPQHH…DGYGDRTLGY (88 aa)) is disordered. A phosphoserine mark is found at Ser-421, Ser-433, and Ser-434. Tyr-435 is subject to Phosphotyrosine. A compositionally biased stretch (basic and acidic residues) spans 447-464 (GERKVGGPHPKYDEDAKR). The residue at position 509 (Ser-509) is a Phosphoserine.

It belongs to the nectin family. Cis- and trans-homodimer. Can form trans-heterodimers with NECTIN3 and with NECTIN4. Interaction between NECTIN1 and NECTIN3 on the pre- and postsynaptic sites, respectively, initiates the formation of puncta adherentia junctions between axons and dendrites. Interacts (via cytoplasmic domain) with AFDN (via PDZ domain); this interaction recruits NECTIN1 to cadherin-based adherens junctions and provides a connection with the actin cytoskeleton. Interacts with integrin alphaV/beta3. Interacts (via Ig-like C2-type domain 2) with FGFR1, FGFR2 and FGFR3. As to quaternary structure, (Microbial infection) Interacts with herpes pseudorabies virus/PRV envelope glycoprotein D.

It is found in the cell membrane. The protein localises to the cell junction. The protein resides in the adherens junction. Its subcellular location is the presynaptic cell membrane. Cell adhesion molecule that promotes cell-cell contacts and plays important roles in the development of the nervous system. Acts by forming homophilic or heterophilic trans-dimers. Heterophilic interactions have been detected between NECTIN1 and NECTIN3 and between NECTIN1 and NECTIN4. Involved in axon guidance by promoting contacts between the commissural axons and the floor plate cells. Involved in synaptogegesis. Has some neurite outgrowth-promoting activity. Promotes formation of checkerboard-like cellular pattern of hair cells and supporting cells in the auditory epithelium via heterophilic interaction with NECTIN3: NECTIN1 is present in the membrane of hair cells and associates with NECTIN3 on supporting cells, thereby mediating heterotypic adhesion between these two cell types. Required for enamel mineralization. In terms of biological role, (Microbial infection) Acts as a receptor for pseudorabies virus/PRV. The chain is Nectin-1 from Mus musculus (Mouse).